Reading from the N-terminus, the 314-residue chain is 4-hydroxy-3-methylbut-2-enyl diphosphate reductase (314 aa).

Cysteine 12 contributes to the [4Fe-4S] cluster binding site. Residues histidine 41 and histidine 74 each contribute to the (2E)-4-hydroxy-3-methylbut-2-enyl diphosphate site. The dimethylallyl diphosphate site is built by histidine 41 and histidine 74. Isopentenyl diphosphate contacts are provided by histidine 41 and histidine 74. Cysteine 96 contacts [4Fe-4S] cluster. Histidine 124 lines the (2E)-4-hydroxy-3-methylbut-2-enyl diphosphate pocket. A dimethylallyl diphosphate-binding site is contributed by histidine 124. Histidine 124 provides a ligand contact to isopentenyl diphosphate. Glutamate 126 serves as the catalytic Proton donor. Threonine 167 serves as a coordination point for (2E)-4-hydroxy-3-methylbut-2-enyl diphosphate. Residue cysteine 197 coordinates [4Fe-4S] cluster. 4 residues coordinate (2E)-4-hydroxy-3-methylbut-2-enyl diphosphate: serine 225, serine 226, asparagine 227, and serine 269. The dimethylallyl diphosphate site is built by serine 225, serine 226, asparagine 227, and serine 269. Isopentenyl diphosphate contacts are provided by serine 225, serine 226, asparagine 227, and serine 269.

This sequence belongs to the IspH family. [4Fe-4S] cluster serves as cofactor.

The catalysed reaction is isopentenyl diphosphate + 2 oxidized [2Fe-2S]-[ferredoxin] + H2O = (2E)-4-hydroxy-3-methylbut-2-enyl diphosphate + 2 reduced [2Fe-2S]-[ferredoxin] + 2 H(+). The enzyme catalyses dimethylallyl diphosphate + 2 oxidized [2Fe-2S]-[ferredoxin] + H2O = (2E)-4-hydroxy-3-methylbut-2-enyl diphosphate + 2 reduced [2Fe-2S]-[ferredoxin] + 2 H(+). The protein operates within isoprenoid biosynthesis; dimethylallyl diphosphate biosynthesis; dimethylallyl diphosphate from (2E)-4-hydroxy-3-methylbutenyl diphosphate: step 1/1. It functions in the pathway isoprenoid biosynthesis; isopentenyl diphosphate biosynthesis via DXP pathway; isopentenyl diphosphate from 1-deoxy-D-xylulose 5-phosphate: step 6/6. Catalyzes the conversion of 1-hydroxy-2-methyl-2-(E)-butenyl 4-diphosphate (HMBPP) into a mixture of isopentenyl diphosphate (IPP) and dimethylallyl diphosphate (DMAPP). Acts in the terminal step of the DOXP/MEP pathway for isoprenoid precursor biosynthesis. The chain is 4-hydroxy-3-methylbut-2-enyl diphosphate reductase from Psychromonas ingrahamii (strain DSM 17664 / CCUG 51855 / 37).